A 232-amino-acid polypeptide reads, in one-letter code: Peroxisomal protein PEX21 (232 aa).

Cys5 is covalently cross-linked (Glycyl cysteine thioester (Cys-Gly) (interchain with G-Cter in ubiquitin)).

Belongs to the peroxin-21 family. As to quaternary structure, interacts with PEX7. Monoubiquitinated at Cys-5; acts as a signal for PEX21 extraction and is required for proper export from peroxisomes and recycling.

The protein localises to the cytoplasm. The protein resides in the cytosol. It is found in the peroxisome. Functionally, mediates peroxisomal import of proteins containing a C-terminal PTS2-type peroxisomal targeting signal via its interaction with PEX7. Interaction with PEX7 only takes place when PEX7 is associated with cargo proteins containing a PTS2 peroxisomal targeting signal. PEX7 along with PTS2-containing cargo proteins are then translocated through the PEX13-PEX14 docking complex together with PEX21. The chain is Peroxisomal protein PEX21 (PEX21) from Candida glabrata (strain ATCC 2001 / BCRC 20586 / JCM 3761 / NBRC 0622 / NRRL Y-65 / CBS 138) (Yeast).